A 332-amino-acid polypeptide reads, in one-letter code: Ribosomal RNA small subunit methyltransferase C (332 aa).

This sequence belongs to the methyltransferase superfamily. RsmC family. In terms of assembly, monomer.

Its subcellular location is the cytoplasm. The catalysed reaction is guanosine(1207) in 16S rRNA + S-adenosyl-L-methionine = N(2)-methylguanosine(1207) in 16S rRNA + S-adenosyl-L-homocysteine + H(+). Specifically methylates the guanine in position 1207 of 16S rRNA in the 30S particle. The sequence is that of Ribosomal RNA small subunit methyltransferase C from Pseudomonas fluorescens (strain ATCC BAA-477 / NRRL B-23932 / Pf-5).